A 284-amino-acid polypeptide reads, in one-letter code: Urease accessory protein UreD (284 aa).

The tract at residues 1–28 (MQSEQQAIGASGCEDAQQPVRQQRARGR) is disordered.

The protein belongs to the UreD family. UreD, UreF and UreG form a complex that acts as a GTP-hydrolysis-dependent molecular chaperone, activating the urease apoprotein by helping to assemble the nickel containing metallocenter of UreC. The UreE protein probably delivers the nickel.

It localises to the cytoplasm. In terms of biological role, required for maturation of urease via the functional incorporation of the urease nickel metallocenter. In Agrobacterium fabrum (strain C58 / ATCC 33970) (Agrobacterium tumefaciens (strain C58)), this protein is Urease accessory protein UreD.